A 491-amino-acid polypeptide reads, in one-letter code: UDP-N-acetylmuramate--L-alanine ligase (491 aa).

126–132 lines the ATP pocket; the sequence is GTHGKTT.

The protein belongs to the MurCDEF family.

The protein localises to the cytoplasm. The catalysed reaction is UDP-N-acetyl-alpha-D-muramate + L-alanine + ATP = UDP-N-acetyl-alpha-D-muramoyl-L-alanine + ADP + phosphate + H(+). Its pathway is cell wall biogenesis; peptidoglycan biosynthesis. Cell wall formation. In Salmonella gallinarum (strain 287/91 / NCTC 13346), this protein is UDP-N-acetylmuramate--L-alanine ligase.